A 133-amino-acid polypeptide reads, in one-letter code: ATP synthase epsilon chain (133 aa).

It belongs to the ATPase epsilon chain family. F-type ATPases have 2 components, CF(1) - the catalytic core - and CF(0) - the membrane proton channel. CF(1) has five subunits: alpha(3), beta(3), gamma(1), delta(1), epsilon(1). CF(0) has three main subunits: a, b and c.

Its subcellular location is the cellular thylakoid membrane. Its function is as follows. Produces ATP from ADP in the presence of a proton gradient across the membrane. The polypeptide is ATP synthase epsilon chain (Prochlorococcus marinus (strain MIT 9303)).